A 426-amino-acid polypeptide reads, in one-letter code: Selenocysteine lyase (426 aa).

Lys239 bears the N6-(pyridoxal phosphate)lysine mark. Cys367 functions as the S-selanylcysteine intermediate in the catalytic mechanism.

This sequence belongs to the class-V pyridoxal-phosphate-dependent aminotransferase family. In terms of assembly, homodimer. Pyridoxal 5'-phosphate serves as cofactor.

The protein localises to the cytoplasm. Its subcellular location is the cytosol. The enzyme catalyses L-selenocysteine + AH2 = hydrogenselenide + L-alanine + A + H(+). Functionally, catalyzes the decomposition of L-selenocysteine to L-alanine and elemental selenium. The protein is Selenocysteine lyase (scly) of Xenopus laevis (African clawed frog).